We begin with the raw amino-acid sequence, 185 residues long: Ribose 1,5-bisphosphate phosphokinase PhnN (185 aa).

10–17 serves as a coordination point for ATP; that stretch reads GPSGSGKD.

Belongs to the ribose 1,5-bisphosphokinase family.

It carries out the reaction alpha-D-ribose 1,5-bisphosphate + ATP = 5-phospho-alpha-D-ribose 1-diphosphate + ADP. The protein operates within metabolic intermediate biosynthesis; 5-phospho-alpha-D-ribose 1-diphosphate biosynthesis; 5-phospho-alpha-D-ribose 1-diphosphate from D-ribose 5-phosphate (route II): step 3/3. Its function is as follows. Catalyzes the phosphorylation of ribose 1,5-bisphosphate to 5-phospho-D-ribosyl alpha-1-diphosphate (PRPP). The protein is Ribose 1,5-bisphosphate phosphokinase PhnN of Shigella dysenteriae serotype 1 (strain Sd197).